A 234-amino-acid chain; its full sequence is Glucosamine-6-phosphate deaminase (234 aa).

Asp62 functions as the Proton acceptor; for enolization step in the catalytic mechanism. Asn128 functions as the For ring-opening step in the catalytic mechanism. His130 (proton acceptor; for ring-opening step) is an active-site residue. Glu135 (for ring-opening step) is an active-site residue.

This sequence belongs to the glucosamine/galactosamine-6-phosphate isomerase family. NagB subfamily.

The enzyme catalyses alpha-D-glucosamine 6-phosphate + H2O = beta-D-fructose 6-phosphate + NH4(+). It functions in the pathway amino-sugar metabolism; N-acetylneuraminate degradation; D-fructose 6-phosphate from N-acetylneuraminate: step 5/5. Catalyzes the reversible isomerization-deamination of glucosamine 6-phosphate (GlcN6P) to form fructose 6-phosphate (Fru6P) and ammonium ion. The protein is Glucosamine-6-phosphate deaminase of Lactobacillus delbrueckii subsp. bulgaricus (strain ATCC 11842 / DSM 20081 / BCRC 10696 / JCM 1002 / NBRC 13953 / NCIMB 11778 / NCTC 12712 / WDCM 00102 / Lb 14).